Here is a 249-residue protein sequence, read N- to C-terminus: Pyridoxine 5'-phosphate synthase (249 aa).

Asn7 serves as a coordination point for 3-amino-2-oxopropyl phosphate. Residue 9–10 coordinates 1-deoxy-D-xylulose 5-phosphate; sequence DH. Arg18 contacts 3-amino-2-oxopropyl phosphate. His43 serves as the catalytic Proton acceptor. 1-deoxy-D-xylulose 5-phosphate-binding residues include Arg45 and His50. Glu70 functions as the Proton acceptor in the catalytic mechanism. Thr100 is a binding site for 1-deoxy-D-xylulose 5-phosphate. Catalysis depends on His198, which acts as the Proton donor. 3-amino-2-oxopropyl phosphate is bound by residues Ala199 and 220-221; that span reads GH.

The protein belongs to the PNP synthase family. As to quaternary structure, homooctamer; tetramer of dimers.

It is found in the cytoplasm. It catalyses the reaction 3-amino-2-oxopropyl phosphate + 1-deoxy-D-xylulose 5-phosphate = pyridoxine 5'-phosphate + phosphate + 2 H2O + H(+). It functions in the pathway cofactor biosynthesis; pyridoxine 5'-phosphate biosynthesis; pyridoxine 5'-phosphate from D-erythrose 4-phosphate: step 5/5. In terms of biological role, catalyzes the complicated ring closure reaction between the two acyclic compounds 1-deoxy-D-xylulose-5-phosphate (DXP) and 3-amino-2-oxopropyl phosphate (1-amino-acetone-3-phosphate or AAP) to form pyridoxine 5'-phosphate (PNP) and inorganic phosphate. This chain is Pyridoxine 5'-phosphate synthase, found in Azoarcus sp. (strain BH72).